Consider the following 88-residue polypeptide: uncharacterized protein (88 aa).

The N-terminal stretch at 1 to 22 (MLKASILFITISLTLMLENSYG) is a signal peptide. 3 disulfides stabilise this stretch: Cys59/Cys73, Cys66/Cys77, and Cys72/Cys82.

Its subcellular location is the secreted. This is an uncharacterized protein from Schistosoma japonicum (Blood fluke).